Reading from the N-terminus, the 779-residue chain is Lysosome membrane protein 2-A (779 aa).

Topologically, residues 1–17 are cytoplasmic; that stretch reads MVKRGCCHRKMVNHKGC. Residues 18 to 38 form a helical membrane-spanning segment; that stretch reads LVSGIFLAVIGAVLFILAFAL. Residues 39-732 are Lumenal-facing; the sequence is LPHLINQTTQ…LLNSQFKLIK (694 aa). N-linked (GlcNAc...) asparagine glycans are attached at residues asparagine 44, asparagine 86, asparagine 95, asparagine 114, asparagine 117, asparagine 201, asparagine 239, asparagine 262, asparagine 266, asparagine 277, asparagine 369, asparagine 410, asparagine 440, asparagine 508, asparagine 543, asparagine 601, asparagine 619, asparagine 651, and asparagine 693. Residues 733 to 753 form a helical membrane-spanning segment; sequence ILGFVPVIVVSIIGGIILIAG. The Cytoplasmic segment spans residues 754–779; it reads ISMFAFGFKKLRQQKQQGYQAIINNE. Positions 771-774 match the Tyrosine-type lysosomal sorting signal motif; the sequence is GYQA.

This sequence belongs to the CD36 family. In terms of processing, heavily glycosylated.

It localises to the lysosome membrane. Functionally, may act as a lysosomal receptor. May be involved in macropinocytosis and fluid phase exocytosis. Binds to the anionic phospholipid phosphoinositol 4,5-bisphosphate, but not to phosphatidylcholine and only weakly to phosphatidylserine. This is Lysosome membrane protein 2-A (lmpA) from Dictyostelium discoideum (Social amoeba).